The sequence spans 315 residues: Porphobilinogen deaminase (315 aa).

At C234 the chain carries S-(dipyrrolylmethanemethyl)cysteine.

It belongs to the HMBS family. Monomer. It depends on dipyrromethane as a cofactor.

It catalyses the reaction 4 porphobilinogen + H2O = hydroxymethylbilane + 4 NH4(+). The protein operates within porphyrin-containing compound metabolism; protoporphyrin-IX biosynthesis; coproporphyrinogen-III from 5-aminolevulinate: step 2/4. Tetrapolymerization of the monopyrrole PBG into the hydroxymethylbilane pre-uroporphyrinogen in several discrete steps. This Mycolicibacterium paratuberculosis (strain ATCC BAA-968 / K-10) (Mycobacterium paratuberculosis) protein is Porphobilinogen deaminase.